A 262-amino-acid chain; its full sequence is Endoplasmic reticulum chaperone BiP (262 aa).

8-11 (GSTR) serves as a coordination point for ATP. The interdomain linker stretch occupies residues 53–63 (QDTGDLVLLDV). The substrate-binding (SBD) stretch occupies residues 64-144 (CPLTLGIETV…PRGVPQIEVT (81 aa)). Lys-91 carries the post-translational modification N6-succinyllysine. Position 136 is an omega-N-methylarginine (Arg-136). Thr-162 carries the post-translational modification O-AMP-threonine; alternate. Position 162 is a phosphothreonine; alternate (Thr-162). Lys-229 is modified (N6,N6,N6-trimethyllysine; by METTL21A; in vitro). Lys-229 is modified (N6,N6-dimethyllysine; alternate). The residue at position 229 (Lys-229) is an N6-methyllysine; alternate. Residue Lys-235 is modified to N6-methyllysine.

It belongs to the heat shock protein 70 family. In terms of assembly, monomer and homooligomer; homooligomerization via the interdomain linker inactivates the chaperone activity and acts as a storage of HSPA5/BiP molecules. Interacts with DNAJC1 (via J domain). Component of an EIF2 complex at least composed of CELF1/CUGBP1, CALR, CALR3, EIF2S1, EIF2S2, HSP90B1 and HSPA5. Part of a large chaperone multiprotein complex comprising DNAJB11, HSP90B1, HSPA5, HYOU, PDIA2, PDIA4, PDIA6, PPIB, SDF2L1, UGGT1 and very small amounts of ERP29, but not, or at very low levels, CALR nor CANX. Interacts with TMEM132A and TRIM21. May form a complex with ERLEC1, OS9, SEL1L and SYVN1. Interacts with DNAJC10. Interacts with DNAJB9/ERdj4; leading to recruit HSPA5/BiP to ERN1/IRE1. Interacts with ERN1/IRE1 (via luminal domain); the interaction takes place following interaction with DNAJB9/ERdj4 and leads to inactivate ERN1/IRE1, the interaction also competitively inhibits ERN1 interaction with MANF. Interacts directly with MANF (via SAP domain); the interaction inhibits ATP binding to HSPA5/BiP and subsequent nucleotide exchange. Interacts with EIF2AK3/PERK (via luminal domain); interaction leads to inactivate EIF2AK3/PERK. Interacts with MX1. Interacts with METTL23. Interacts with CEMIP; the interaction induces calcium leakage from the endoplasmic reticulum and cell migration. Interacts with PCSK4 form; the interaction takes place in the endoplasmic reticulum. Interacts with CIPC. Interacts with CCDC88B (via C-terminus); the interaction opposes ERN1-mediated JNK activation, protecting against apoptosis. Interacts with INPP5K; necessary for INPP5K localization at the endoplasmic reticulum. Interacts with MANF; the interaction is direct. Interacts with LOXL2; leading to activate the ERN1/IRE1-XBP1 pathway of the unfolded protein response. Interacts with CLU under stressed condition; interaction increases CLU protein stability; facilitates its retrotranslocation and redistribution to the mitochondria; cooperatively suppress stress-induced apoptosis by stabilizing mitochondrial membrane integrity. Interacts with CCDC47. Interacts with CLN3. Interacts with ELAPOR1; may regulate the function of HSPA5 in apoptosis and cell proliferation. Interacts with CASP7. Interacts with ILDR2; the interaction stabilizes ILDR2 expression. Interacts with ADAM7. In terms of processing, in unstressed cells, AMPylation at Thr-162 by FICD inactivates the chaperome activity: AMPylated form is locked in a relatively inert state and only weakly stimulated by J domain-containing proteins. In response to endoplasmic reticulum stress, de-AMPylation by the same protein, FICD, restores the chaperone activity.

The protein resides in the endoplasmic reticulum lumen. Its subcellular location is the melanosome. It is found in the cytoplasm. The protein localises to the cell surface. The enzyme catalyses ATP + H2O = ADP + phosphate + H(+). The chaperone activity is regulated by ATP-induced allosteric coupling of the nucleotide-binding (NBD) and substrate-binding (SBD) domains. In the ADP-bound and nucleotide-free (apo) states, the two domains have little interaction. In contrast, in the ATP-bound state the two domains are tightly coupled, which results in drastically accelerated kinetics in both binding and release of polypeptide substrates. J domain-containing co-chaperones (DNAJB9/ERdj4 or DNAJC10/ERdj5) stimulate the ATPase activity and are required for efficient substrate recognition by HSPA5/BiP. Homooligomerization inactivates participating HSPA5/BiP protomers and probably act as reservoirs to store HSPA5/BiP molecules when they are not needed by the cell. Its function is as follows. Endoplasmic reticulum chaperone that plays a key role in protein folding and quality control in the endoplasmic reticulum lumen. Involved in the correct folding of proteins and degradation of misfolded proteins via its interaction with DNAJC10/ERdj5, probably to facilitate the release of DNAJC10/ERdj5 from its substrate. Acts as a key repressor of the EIF2AK3/PERK and ERN1/IRE1-mediated unfolded protein response (UPR). In the unstressed endoplasmic reticulum, recruited by DNAJB9/ERdj4 to the luminal region of ERN1/IRE1, leading to disrupt the dimerization of ERN1/IRE1, thereby inactivating ERN1/IRE1. Also binds and inactivates EIF2AK3/PERK in unstressed cells. Accumulation of misfolded protein in the endoplasmic reticulum causes release of HSPA5/BiP from ERN1/IRE1 and EIF2AK3/PERK, allowing their homodimerization and subsequent activation. Plays an auxiliary role in post-translational transport of small presecretory proteins across endoplasmic reticulum (ER). May function as an allosteric modulator for SEC61 channel-forming translocon complex, likely cooperating with SEC62 to enable the productive insertion of these precursors into SEC61 channel. Appears to specifically regulate translocation of precursors having inhibitory residues in their mature region that weaken channel gating. May also play a role in apoptosis and cell proliferation. This chain is Endoplasmic reticulum chaperone BiP, found in Sus scrofa (Pig).